The primary structure comprises 252 residues: MKNEIAAVVFFFTRLVRKHDKLKKEAVERFAEKLTLILQEKYKNHWYPEKPSKGQAYRCIRVNKFQRVDPDVLKACENSCILYSDLGLPKELTLWVDPCEVCCRYGEKNNAFIVASFENKDENKDEISRKVTRALDKVTSDYHSGSSSSDEETSKEMEVKPSSVTAAASPVYQISELIFPPLPMWHPLPRKKPGMYRGNGHQNHYPPPVPFGYPNQGRKNKPYRPIPVTWVPPPGMHCDRNHWINPHMLAPH.

The tract at residues 138–162 (VTSDYHSGSSSSDEETSKEMEVKPS) is disordered.

Belongs to the BTG family. Ubiquitous. High expression in the ventricular zone of the developing central nervous system. High in ovary, testis, prostate, thymus and lung.

Functionally, overexpression impairs serum-induced cell cycle progression from the G0/G1 to S phase. The chain is Protein BTG3 (BTG3) from Homo sapiens (Human).